A 208-amino-acid chain; its full sequence is Uracil phosphoribosyltransferase (208 aa).

5-phospho-alpha-D-ribose 1-diphosphate contacts are provided by residues Arg78, Arg103, and 130-138; that span reads DPMLATGGS. Residues Ile193 and 198-200 contribute to the uracil site; that span reads GDA. Asp199 provides a ligand contact to 5-phospho-alpha-D-ribose 1-diphosphate.

Belongs to the UPRTase family. The cofactor is Mg(2+).

The catalysed reaction is UMP + diphosphate = 5-phospho-alpha-D-ribose 1-diphosphate + uracil. It participates in pyrimidine metabolism; UMP biosynthesis via salvage pathway; UMP from uracil: step 1/1. Its activity is regulated as follows. Allosterically activated by GTP. Catalyzes the conversion of uracil and 5-phospho-alpha-D-ribose 1-diphosphate (PRPP) to UMP and diphosphate. This is Uracil phosphoribosyltransferase from Tolumonas auensis (strain DSM 9187 / NBRC 110442 / TA 4).